The following is a 552-amino-acid chain: Phosphoglucomutase (552 aa).

The active-site Phosphoserine intermediate is the Ser-135. Mg(2+)-binding residues include Ser-135, Asp-289, Asp-291, and Asp-293.

The protein belongs to the phosphohexose mutase family. It depends on Mg(2+) as a cofactor.

The enzyme catalyses alpha-D-glucose 1-phosphate = alpha-D-glucose 6-phosphate. Its pathway is glycolipid metabolism; diglucosyl-diacylglycerol biosynthesis. In terms of biological role, catalyzes the interconversion between glucose-6-phosphate and alpha-glucose-1-phosphate. This is the first step in the biosynthesis of diglucosyl-diacylglycerol (Glc2-DAG), i.e. a glycolipid found in the membrane, which is also used as a membrane anchor for lipoteichoic acid (LTA). The polypeptide is Phosphoglucomutase (pgcA) (Staphylococcus saprophyticus subsp. saprophyticus (strain ATCC 15305 / DSM 20229 / NCIMB 8711 / NCTC 7292 / S-41)).